Consider the following 426-residue polypeptide: Putative competence-damage inducible protein (426 aa).

It belongs to the CinA family.

The chain is Putative competence-damage inducible protein from Symbiobacterium thermophilum (strain DSM 24528 / JCM 14929 / IAM 14863 / T).